A 107-amino-acid polypeptide reads, in one-letter code: uncharacterized protein (107 aa).

A helical membrane pass occupies residues 62–79; sequence LLVVIVYYFSHVGSFSLA.

The protein resides in the nucleus membrane. This is an uncharacterized protein from Schizosaccharomyces pombe (strain 972 / ATCC 24843) (Fission yeast).